A 209-amino-acid polypeptide reads, in one-letter code: Uracil phosphoribosyltransferase (209 aa).

5-phospho-alpha-D-ribose 1-diphosphate is bound by residues Arg-79, Arg-104, and 131–139 (DPMLATGGS). Uracil-binding positions include Ile-194 and 199–201 (GDA). Residue Asp-200 participates in 5-phospho-alpha-D-ribose 1-diphosphate binding.

This sequence belongs to the UPRTase family. It depends on Mg(2+) as a cofactor.

It catalyses the reaction UMP + diphosphate = 5-phospho-alpha-D-ribose 1-diphosphate + uracil. It functions in the pathway pyrimidine metabolism; UMP biosynthesis via salvage pathway; UMP from uracil: step 1/1. Its activity is regulated as follows. Allosterically activated by GTP. Functionally, catalyzes the conversion of uracil and 5-phospho-alpha-D-ribose 1-diphosphate (PRPP) to UMP and diphosphate. This chain is Uracil phosphoribosyltransferase, found in Streptococcus mutans serotype c (strain ATCC 700610 / UA159).